The following is a 375-amino-acid chain: Elongation factor Tu (375 aa).

Positions 10–205 constitute a tr-type G domain; sequence KPHINVGAIG…TMDKYFVIPE (196 aa). Residues 19 to 26 form a G1 region; that stretch reads GHVDHGKT. Position 19-26 (19-26) interacts with GTP; that stretch reads GHVDHGKT. Residue Thr-26 coordinates Mg(2+). The interval 60–64 is G2; the sequence is GITIN. A G3 region spans residues 81 to 84; sequence DCPG. GTP contacts are provided by residues 81-85 and 136-139; these read DCPGH and NKMD. Positions 136–139 are G4; sequence NKMD. The G5 stretch occupies residues 173–175; the sequence is SAF.

Belongs to the TRAFAC class translation factor GTPase superfamily. Classic translation factor GTPase family. EF-Tu/EF-1A subfamily. Monomer.

It is found in the cytoplasm. It catalyses the reaction GTP + H2O = GDP + phosphate + H(+). GTP hydrolase that promotes the GTP-dependent binding of aminoacyl-tRNA to the A-site of ribosomes during protein biosynthesis. The polypeptide is Elongation factor Tu (tuf) (Spirochaeta aurantia).